Reading from the N-terminus, the 497-residue chain is RNA-splicing ligase RtcB homolog (497 aa).

Positions 111, 114, 219, 251, and 345 each coordinate Mn(2+). 218–222 (NHYAE) contributes to the GMP binding site. GMP is bound by residues 345 to 346 (HN), 394 to 397 (GGTM), Ser-401, 420 to 423 (HGAG), and Lys-496. The GMP-histidine intermediate role is filled by His-420.

Belongs to the RtcB family. As to quaternary structure, catalytic component of the tRNA-splicing ligase complex. It depends on Mn(2+) as a cofactor.

The catalysed reaction is a 3'-end 3'-phospho-ribonucleotide-RNA + a 5'-end dephospho-ribonucleoside-RNA + GTP = a ribonucleotidyl-ribonucleotide-RNA + GMP + diphosphate. The enzyme catalyses a 3'-end 2',3'-cyclophospho-ribonucleotide-RNA + a 5'-end dephospho-ribonucleoside-RNA + GTP + H2O = a ribonucleotidyl-ribonucleotide-RNA + GMP + diphosphate + H(+). Catalytic subunit of the tRNA-splicing ligase complex that acts by directly joining spliced tRNA halves to mature-sized tRNAs by incorporating the precursor-derived splice junction phosphate into the mature tRNA as a canonical 3',5'-phosphodiester. May act as an RNA ligase with broad substrate specificity, and may function toward other RNAs. This Monosiga brevicollis (Choanoflagellate) protein is RNA-splicing ligase RtcB homolog.